We begin with the raw amino-acid sequence, 258 residues long: Small ribosomal subunit protein mS40 (258 aa).

The N-terminal 35 residues, 1 to 35 (MAASILNVLLRRLPGVSPFRGAYGVQVLLQTLCTK), are a transit peptide targeting the mitochondrion. Ser-49 is subject to Phosphoserine. A disordered region spans residues 223 to 258 (RLREESGPPPELMPEVPLTAPAEASSTEPGAPQSAL).

It belongs to the bacterial ribosomal protein bS18 family. Mitochondrion-specific ribosomal protein mS40 subfamily. As to quaternary structure, component of the mitochondrial ribosome small subunit (28S) which comprises a 12S rRNA and about 30 distinct proteins.

The protein resides in the mitochondrion. In Sus scrofa (Pig), this protein is Small ribosomal subunit protein mS40 (MRPS18B).